The following is a 247-amino-acid chain: 2,3-bisphosphoglycerate-dependent phosphoglycerate mutase (247 aa).

Residues 8–15 (RHGESQWN), 21–22 (TG), Arg-60, 87–90 (ERHY), Lys-98, 114–115 (RR), and 183–184 (GN) each bind substrate. His-9 acts as the Tele-phosphohistidine intermediate in catalysis. Glu-87 serves as the catalytic Proton donor/acceptor.

This sequence belongs to the phosphoglycerate mutase family. BPG-dependent PGAM subfamily.

The catalysed reaction is (2R)-2-phosphoglycerate = (2R)-3-phosphoglycerate. The protein operates within carbohydrate degradation; glycolysis; pyruvate from D-glyceraldehyde 3-phosphate: step 3/5. In terms of biological role, catalyzes the interconversion of 2-phosphoglycerate and 3-phosphoglycerate. This Chlorobium phaeobacteroides (strain BS1) protein is 2,3-bisphosphoglycerate-dependent phosphoglycerate mutase.